A 145-amino-acid chain; its full sequence is Immune protein Tsi4 (145 aa).

2 helical membrane-spanning segments follow: residues 9 to 29 (IGGL…LLAG) and 109 to 129 (ALWG…IVGF).

The protein localises to the membrane. Immunity protein that plays a role in preventing early activation of toxin Tse4. In Pseudomonas aeruginosa (strain ATCC 15692 / DSM 22644 / CIP 104116 / JCM 14847 / LMG 12228 / 1C / PRS 101 / PAO1), this protein is Immune protein Tsi4.